Reading from the N-terminus, the 269-residue chain is uncharacterized protein (269 aa).

Residues 52-262 (KNVYEQLVAT…RKILVESINK (211 aa)) adopt a coiled-coil conformation.

This is an uncharacterized protein from Caenorhabditis elegans.